Reading from the N-terminus, the 486-residue chain is Cardiolipin synthase A (486 aa).

Transmembrane regions (helical) follow at residues 3 to 23 and 38 to 58; these read TFYT…IAGV and MAWL…YLSF. 2 consecutive PLD phosphodiesterase domains span residues 219 to 246 and 399 to 426; these read MDLR…VDPR and EGGL…DMRS. Catalysis depends on residues His-224, Lys-226, Asp-231, His-404, Lys-406, and Asp-411.

The protein belongs to the phospholipase D family. Cardiolipin synthase subfamily. ClsA sub-subfamily.

It is found in the cell inner membrane. It carries out the reaction 2 a 1,2-diacyl-sn-glycero-3-phospho-(1'-sn-glycerol) = a cardiolipin + glycerol. Functionally, catalyzes the reversible phosphatidyl group transfer from one phosphatidylglycerol molecule to another to form cardiolipin (CL) (diphosphatidylglycerol) and glycerol. In Klebsiella pneumoniae (strain 342), this protein is Cardiolipin synthase A.